A 704-amino-acid chain; its full sequence is Elongation factor G (704 aa).

The 277-residue stretch at 9–285 folds into the tr-type G domain; that stretch reads AKVRNIGIMA…AIVAYLPSPL (277 aa). GTP contacts are provided by residues 18–25, 82–86, and 136–139; these read AHIDAGKT, DTPGH, and NKMD.

This sequence belongs to the TRAFAC class translation factor GTPase superfamily. Classic translation factor GTPase family. EF-G/EF-2 subfamily.

Its subcellular location is the cytoplasm. Its function is as follows. Catalyzes the GTP-dependent ribosomal translocation step during translation elongation. During this step, the ribosome changes from the pre-translocational (PRE) to the post-translocational (POST) state as the newly formed A-site-bound peptidyl-tRNA and P-site-bound deacylated tRNA move to the P and E sites, respectively. Catalyzes the coordinated movement of the two tRNA molecules, the mRNA and conformational changes in the ribosome. This is Elongation factor G from Thermobifida fusca (strain YX).